The sequence spans 328 residues: Eukaryotic translation initiation factor 3 subunit I (328 aa).

5 WD repeats span residues 8-47 (GHERAITQIKYNREGDLIFSTAKDHKPSVWFSLNGERLGT), 50-91 (GHQG…GTIP), 148-187 (SIQTKITSMLWGALDETVITGHENGSIRIWDLRTAKELNS), 190-229 (DHTGVINDMQLSADGTMLVSASKDTTAKLFDSESLMCLKT), and 287-328 (GHFG…FVFE).

Belongs to the eIF-3 subunit I family. In terms of assembly, component of the eukaryotic translation initiation factor 3 (eIF-3) complex.

The protein localises to the cytoplasm. Functionally, component of the eukaryotic translation initiation factor 3 (eIF-3) complex, which is involved in protein synthesis of a specialized repertoire of mRNAs and, together with other initiation factors, stimulates binding of mRNA and methionyl-tRNAi to the 40S ribosome. The eIF-3 complex specifically targets and initiates translation of a subset of mRNAs involved in cell proliferation. The sequence is that of Eukaryotic translation initiation factor 3 subunit I from Culex quinquefasciatus (Southern house mosquito).